Here is a 133-residue protein sequence, read N- to C-terminus: Large ribosomal subunit protein uL15 (133 aa).

The segment at 1–64 (MGLENLKPAK…QPLQRRLPKI (64 aa)) is disordered.

It belongs to the universal ribosomal protein uL15 family. In terms of assembly, part of the 50S ribosomal subunit.

Functionally, binds to the 23S rRNA. The chain is Large ribosomal subunit protein uL15 from Helicobacter pylori (strain J99 / ATCC 700824) (Campylobacter pylori J99).